We begin with the raw amino-acid sequence, 103 residues long: Small ribosomal subunit protein uS10 (103 aa).

Belongs to the universal ribosomal protein uS10 family. Part of the 30S ribosomal subunit.

Involved in the binding of tRNA to the ribosomes. The protein is Small ribosomal subunit protein uS10 of Idiomarina loihiensis (strain ATCC BAA-735 / DSM 15497 / L2-TR).